The sequence spans 137 residues: Large ribosomal subunit protein uL16c (137 aa).

The protein belongs to the universal ribosomal protein uL16 family. Part of the 50S ribosomal subunit.

Its subcellular location is the plastid. This chain is Large ribosomal subunit protein uL16c, found in Cuscuta exaltata (Tall dodder).